The primary structure comprises 412 residues: Histidine--tRNA ligase (412 aa).

The protein belongs to the class-II aminoacyl-tRNA synthetase family. In terms of assembly, homodimer.

It localises to the cytoplasm. It carries out the reaction tRNA(His) + L-histidine + ATP = L-histidyl-tRNA(His) + AMP + diphosphate + H(+). The protein is Histidine--tRNA ligase of Rickettsia typhi (strain ATCC VR-144 / Wilmington).